The following is a 606-amino-acid chain: DNA mismatch repair protein MutL (606 aa).

The disordered stretch occupies residues 350–371 (GWRPSAPSAPWTPEASPSRPYQ).

The protein belongs to the DNA mismatch repair MutL/HexB family.

Functionally, this protein is involved in the repair of mismatches in DNA. It is required for dam-dependent methyl-directed DNA mismatch repair. May act as a 'molecular matchmaker', a protein that promotes the formation of a stable complex between two or more DNA-binding proteins in an ATP-dependent manner without itself being part of a final effector complex. The chain is DNA mismatch repair protein MutL from Rhizobium rhizogenes (strain K84 / ATCC BAA-868) (Agrobacterium radiobacter).